The following is a 634-amino-acid chain: MSKPEVENLFSLCDSESKGYLTMEDLRKVCPQLDDNDLRFIFTELDQDGSGKIEKLEFLRGFQDTVQHGESHGLNGMQRRASVAVEDPPMFLRDEQMFDSESDSTSSRPAIRVFDEEHYHSESDTNINIDFSVPCQEEVLVLYEQLQSSGVPALLRKFERVVGSFHKELSEKKHENERLQRIYASEREMYNRRMEEMESEVDQQLELTEMKARQEERDRLTKEKEEMRQRMSDEMSEMRNNIERLQKMEKALERENERLNHQKELSDKLKVVNEENNDLRQNLAENHLELAMIKSELAQVRCEFDQKQDELSARRDQASHATEESESVRKQLQLLFDANRKLHETNESLRDALDSRASVLRQFNLRTPSPGLLSSNRNSVENFQTSTNVFRSVPLHAISTEEQVPETSLILDDAHSLQGLDTPGDLMGLNDANGPAERTFRIVMCGDAAVGKSSFVMRVIRRQFTNQLPSTLGVDFHVKTVNVDGRNVALQLWDTAGQERFRSLCKSYFRRADGAILVYDVCAEQSFLRVRDWIETIKESTERSIPIILVGNKVDMRISTPGSVAKTDGASMAAAMGVLFMETSALDGSNIDNAMLALTRELMAVEDVEIRSTGVVLNPAVAKKGGCFSKCRGS.

EF-hand domains are found at residues 5–33 and 33–68; these read EVENLFSLCDSESKGYLTMEDLRKVCPQL and LDDNDLRFIFTELDQDGSGKIEKLEFLRGFQDTVQH. Residues Asp-46, Asp-48, Ser-50, Lys-52, and Glu-57 each coordinate Ca(2+). Positions 169 to 310 form a coiled coil; it reads LSEKKHENER…RCEFDQKQDE (142 aa). A disordered region spans residues 212-234; it reads ARQEERDRLTKEKEEMRQRMSDE. Residues 449–454, 552–555, and 585–586 contribute to the GTP site; these read AVGKSS, NKVD, and AL. Positions 632 to 634 are cleaved as a propeptide — removed in mature form; it reads RGS.

It belongs to the small GTPase superfamily. Rab family. Homodimer.

The protein localises to the cytoplasm. It localises to the perinuclear region. Binds GTP and GDP. Plays a role in uterine seam cell development. The polypeptide is Ras and EF-hand domain-containing protein homolog (Caenorhabditis elegans).